We begin with the raw amino-acid sequence, 149 residues long: Deoxyuridine 5'-triphosphate nucleotidohydrolase (149 aa).

Substrate contacts are provided by residues R68–G70, N81, L85–D87, and M95.

Belongs to the dUTPase family. It depends on Mg(2+) as a cofactor.

It catalyses the reaction dUTP + H2O = dUMP + diphosphate + H(+). It functions in the pathway pyrimidine metabolism; dUMP biosynthesis; dUMP from dCTP (dUTP route): step 2/2. Functionally, this enzyme is involved in nucleotide metabolism: it produces dUMP, the immediate precursor of thymidine nucleotides and it decreases the intracellular concentration of dUTP so that uracil cannot be incorporated into DNA. This is Deoxyuridine 5'-triphosphate nucleotidohydrolase from Bordetella pertussis (strain Tohama I / ATCC BAA-589 / NCTC 13251).